The primary structure comprises 250 residues: Tripartite motif-containing protein 74 (250 aa).

The RING-type zinc-finger motif lies at 16-57 (CPICLEVFKESLMLQCGHSYCKGCLVSLSYHLDTKVRCPMCW). The B box-type zinc finger occupies 84–125 (PEPKVCVHHRNPLSLFCEKDQELICGLCGLLGSHQHHPVTPV). The Zn(2+) site is built by Cys-89, His-92, Cys-111, and His-117. 2 coiled-coil regions span residues 125–169 (VSTV…NESD) and 204–235 (LVAS…FGNE).

This sequence belongs to the TRIM/RBCC family.

The polypeptide is Tripartite motif-containing protein 74 (TRIM74) (Homo sapiens (Human)).